The following is a 304-amino-acid chain: Large ribosomal subunit protein uL18z (304 aa).

Positions 285–304 (LNALNSSAGADDDDEEEDDE) are disordered. A compositionally biased stretch (acidic residues) spans 294–304 (ADDDDEEEDDE).

It belongs to the universal ribosomal protein uL18 family. As to quaternary structure, component of the large ribosomal subunit (LSU).

It is found in the cytoplasm. The protein localises to the nucleus. Component of the ribosome, a large ribonucleoprotein complex responsible for the synthesis of proteins in the cell. The small ribosomal subunit (SSU) binds messenger RNAs (mRNAs) and translates the encoded message by selecting cognate aminoacyl-transfer RNA (tRNA) molecules. The large subunit (LSU) contains the ribosomal catalytic site termed the peptidyl transferase center (PTC), which catalyzes the formation of peptide bonds, thereby polymerizing the amino acids delivered by tRNAs into a polypeptide chain. The nascent polypeptides leave the ribosome through a tunnel in the LSU and interact with protein factors that function in enzymatic processing, targeting, and the membrane insertion of nascent chains at the exit of the ribosomal tunnel. The chain is Large ribosomal subunit protein uL18z (RPL5A) from Oryza sativa subsp. japonica (Rice).